Consider the following 362-residue polypeptide: 3-dehydroquinate synthase (362 aa).

NAD(+) contacts are provided by residues 71–76, 105–109, 129–130, K142, K151, and 169–172; these read DGEQYK, GVIGD, TT, and CLKT. Residues E184, H247, and H264 each contribute to the Zn(2+) site.

Belongs to the sugar phosphate cyclases superfamily. Dehydroquinate synthase family. It depends on NAD(+) as a cofactor. Co(2+) serves as cofactor. Zn(2+) is required as a cofactor.

The protein resides in the cytoplasm. The catalysed reaction is 7-phospho-2-dehydro-3-deoxy-D-arabino-heptonate = 3-dehydroquinate + phosphate. Its pathway is metabolic intermediate biosynthesis; chorismate biosynthesis; chorismate from D-erythrose 4-phosphate and phosphoenolpyruvate: step 2/7. Its function is as follows. Catalyzes the conversion of 3-deoxy-D-arabino-heptulosonate 7-phosphate (DAHP) to dehydroquinate (DHQ). This is 3-dehydroquinate synthase from Salmonella typhi.